We begin with the raw amino-acid sequence, 151 residues long: Transcriptional repressor NrdR (151 aa).

The segment at 3 to 34 (CPYCGSLDNKVIDSRLSRDDTETRRRRECLEC) is a zinc-finger region. The ATP-cone domain maps to 49–139 (LMIVKKDGRR…VYREFKDVHD (91 aa)).

Belongs to the NrdR family. The cofactor is Zn(2+).

Negatively regulates transcription of bacterial ribonucleotide reductase nrd genes and operons by binding to NrdR-boxes. This is Transcriptional repressor NrdR from Desulfosudis oleivorans (strain DSM 6200 / JCM 39069 / Hxd3) (Desulfococcus oleovorans).